The primary structure comprises 849 residues: Period circadian protein (849 aa).

Over residues 1–13 (MNNMDGSENNAKV) the composition is skewed to polar residues. A disordered region spans residues 1 to 79 (MNNMDGSENN…LKKKKQVETL (79 aa)). 2 stretches are compositionally biased toward low complexity: residues 14–27 (SDSA…NSQS) and 35–58 (STHS…SSSS). The Nuclear localization signal motif lies at 63–74 (DQKKEKELKKKK). PAS domains are found at residues 166–296 (NGFS…QAVP) and 314–416 (FVIR…YIIE). The tract at residues 680 to 746 (NNTPSVYEKP…VSTSSQWSSS (67 aa)) is disordered. Basic residues predominate over residues 706–720 (NKHHCPSSRQFRRKQ). Positions 735-746 (NPVSTSSQWSSS) are enriched in low complexity.

Forms a heterodimer with timeless (TIM); the complex then translocates into the nucleus. Phosphorylated with a circadian rhythmicity.

Its subcellular location is the nucleus. Functionally, involved in the generation of biological rhythms. The biological cycle depends on the rhythmic formation and nuclear localization of the tim-per complex. Light induces the degradation of tim, which promotes elimination of per. Nuclear activity of the heterodimer coordinatively regulates per and tim transcription negative feedback loop. Behaves as a negative element in circadian transcriptional loop. Does not appear to bind DNA, suggesting indirect transcriptional inhibition. Expression exhibits prominent circadian variation in adult heads and in particular in the photoreceptor nuclei. This Antheraea pernyi (Chinese oak silk moth) protein is Period circadian protein (per).